The following is a 233-amino-acid chain: Triosephosphate isomerase (233 aa).

8–10 (NWK) contacts substrate. Histidine 91 (electrophile) is an active-site residue. Glutamate 155 serves as the catalytic Proton acceptor. Positions 161 and 192 each coordinate substrate.

The protein belongs to the triosephosphate isomerase family. In terms of assembly, homodimer.

It localises to the cytoplasm. It catalyses the reaction D-glyceraldehyde 3-phosphate = dihydroxyacetone phosphate. It functions in the pathway carbohydrate biosynthesis; gluconeogenesis. Its pathway is carbohydrate degradation; glycolysis; D-glyceraldehyde 3-phosphate from glycerone phosphate: step 1/1. Its function is as follows. Involved in the gluconeogenesis. Catalyzes stereospecifically the conversion of dihydroxyacetone phosphate (DHAP) to D-glyceraldehyde-3-phosphate (G3P). This Wolbachia sp. subsp. Brugia malayi (strain TRS) protein is Triosephosphate isomerase.